The primary structure comprises 423 residues: T-box transcription factor T-A (423 aa).

The T-box DNA-binding region spans 44 to 212 (LWTKFKELTN…HNPFAKAFLD (169 aa)). Residues 215–227 (ERSDHKEVPDHST) are compositionally biased toward basic and acidic residues. Disordered regions lie at residues 215–234 (ERSD…QSGY) and 280–304 (AAPY…SSGS). Over residues 290 to 304 (RSTTTNNYMDNSSGS) the composition is skewed to polar residues.

Monomer. Binds DNA as a monomer. As to expression, first expressed at the dorsal side of the blastula embryo. Expressed in the germ ring, shield and chordamesoderm during gastrulation and is restricted to the notochord and tailbud during somitogenesis (at protein level).

The protein localises to the nucleus. Its function is as follows. Involved in the transcriptional regulation of genes required for mesoderm differentiation, including itself. Indispensable for the formation of the notochord and the tail structure. Functions together with tbx16/spadetail in development of trunk and tail mesoderm. Functions by itself early in development to repress medial floor plate and promote notochord fate but at later times, functions together with tbx16/spadetail to promote medial floor plate formation. Acts in a parallel pathway to, but cooperates with, non-canonical wnt-signaling during tail formation. Required for the morphogenesis of Kupffer's vesicle and regulates left-right asymmetry. The protein is T-box transcription factor T-A (tbxta) of Danio rerio (Zebrafish).